The primary structure comprises 637 residues: 1-deoxy-D-xylulose-5-phosphate synthase (637 aa).

Thiamine diphosphate is bound by residues His-73 and 113-115 (SHA). Residue Asp-145 coordinates Mg(2+). Residues 146 to 147 (GA), Asn-175, Tyr-286, and Glu-367 each bind thiamine diphosphate. Asn-175 serves as a coordination point for Mg(2+).

Belongs to the transketolase family. DXPS subfamily. As to quaternary structure, homodimer. It depends on Mg(2+) as a cofactor. Requires thiamine diphosphate as cofactor.

It catalyses the reaction D-glyceraldehyde 3-phosphate + pyruvate + H(+) = 1-deoxy-D-xylulose 5-phosphate + CO2. It functions in the pathway metabolic intermediate biosynthesis; 1-deoxy-D-xylulose 5-phosphate biosynthesis; 1-deoxy-D-xylulose 5-phosphate from D-glyceraldehyde 3-phosphate and pyruvate: step 1/1. In terms of biological role, catalyzes the acyloin condensation reaction between C atoms 2 and 3 of pyruvate and glyceraldehyde 3-phosphate to yield 1-deoxy-D-xylulose-5-phosphate (DXP). The sequence is that of 1-deoxy-D-xylulose-5-phosphate synthase from Thermobifida fusca (strain YX).